Here is a 183-residue protein sequence, read N- to C-terminus: dCTP deaminase (183 aa).

DCTP-binding positions include 106 to 111, 130 to 132, Q151, Y165, and Q175; these read KSTYAR and TLE. E132 acts as the Proton donor/acceptor in catalysis.

The protein belongs to the dCTP deaminase family. As to quaternary structure, homotrimer.

The enzyme catalyses dCTP + H2O + H(+) = dUTP + NH4(+). The protein operates within pyrimidine metabolism; dUMP biosynthesis; dUMP from dCTP (dUTP route): step 1/2. Its function is as follows. Catalyzes the deamination of dCTP to dUTP. This chain is dCTP deaminase, found in Acidobacterium capsulatum (strain ATCC 51196 / DSM 11244 / BCRC 80197 / JCM 7670 / NBRC 15755 / NCIMB 13165 / 161).